The primary structure comprises 1105 residues: Pheromone-regulated membrane protein 10 (1105 aa).

The span at 1-11 (MSDNRPTYDTS) shows a compositional bias: polar residues. Disordered regions lie at residues 1–22 (MSDN…NHFH), 36–55 (RKQN…TASN), 65–123 (GSNH…FYGD), 151–278 (IKPK…GGGL), 385–473 (AGAS…FLRG), and 520–656 (EQKS…LRHK). Residues 67–82 (NHKFGNSINNNNNNAN) are compositionally biased toward low complexity. Positions 85–106 (LGSSSAGTNRRSLISPTSSTHV) are enriched in polar residues. The segment covering 162-178 (DSSDDDGNNLDEVEDET) has biased composition (acidic residues). A compositionally biased stretch (polar residues) spans 185–197 (LNQNHPPQQYYET). The span at 198–210 (DSSDEDEEDDDEV) shows a compositional bias: acidic residues. Residues 390 to 413 (LDHSQQSSAAPSTEITPSQSPNQH) show a composition bias toward polar residues. Low complexity predominate over residues 417-439 (EKSNNNENNQQSTTVESSSSTSS). A compositionally biased stretch (basic and acidic residues) spans 446–459 (LARRRASEERKKAE). Composition is skewed to polar residues over residues 520–539 (EQKS…GTAL), 592–606 (RTNT…NSEE), and 624–633 (MNANLPSFQN). The next 10 membrane-spanning stretches (helical) occupy residues 782–802 (PPWL…PFAF), 809–829 (LPIS…VSSI), 835–855 (SVFE…IGSI), 860–880 (LFCF…GYII), 903–923 (VIYS…YGWI), 938–958 (AIDE…LGLI), 963–983 (WSQV…SFFA), 986–1006 (HFST…GVLG), 1015–1035 (GMAV…GIAS), and 1075–1095 (VEVS…IYPF).

This sequence belongs to the ThrE exporter (TC 2.A.79) family.

The protein resides in the membrane. This chain is Pheromone-regulated membrane protein 10 (PRM10), found in Candida albicans (strain SC5314 / ATCC MYA-2876) (Yeast).